A 292-amino-acid polypeptide reads, in one-letter code: AT-hook motif nuclear-localized protein 23 (292 aa).

The disordered stretch occupies residues 23–100 (HLHHNSSSDD…SKNKPKPPVI (78 aa)). Residues 60 to 79 (SGGGSGSSGGGGGHGGGGDV) show a composition bias toward gly residues. The a.T hook DNA-binding region spans 82–94 (RRPRGRPPGSKNK). Residues 106–242 (ANTLRAHILE…EDEQQQQLGG (137 aa)) enclose the PPC domain.

It is found in the nucleus. Transcription factor that specifically binds AT-rich DNA sequences related to the nuclear matrix attachment regions (MARs). This is AT-hook motif nuclear-localized protein 23 from Arabidopsis thaliana (Mouse-ear cress).